Consider the following 266-residue polypeptide: MGQKIHPTGFRLAVSRNWASRWYANNNNFAAMLQEDIGVREYLKKKLKNASVGRVVIERPAKNARITIFSSRPGVVIGKKGEDIELLKTELQRRMGVPVHVNIEEIRKPETDAQLIADSITQQLERRIMFRRAMKRAMQNAMRLGAQGIKIMSAGRLNGIEIARTEWYREGRVPLHTLRADIDYATSEAKTTYGIIGVKVWVYKGDTLGRNDAPVVEEVAEDKRPRRNARPGDRRPRRDGEGGAPGARRGAPRRGAGKPEDGKTGE.

The region spanning 39–107 (VREYLKKKLK…PVHVNIEEIR (69 aa)) is the KH type-2 domain. The tract at residues 218–266 (EVAEDKRPRRNARPGDRRPRRDGEGGAPGARRGAPRRGAGKPEDGKTGE) is disordered. Basic and acidic residues-rich tracts occupy residues 230–241 (RPGDRRPRRDGE) and 257–266 (GKPEDGKTGE).

The protein belongs to the universal ribosomal protein uS3 family. Part of the 30S ribosomal subunit. Forms a tight complex with proteins S10 and S14.

Functionally, binds the lower part of the 30S subunit head. Binds mRNA in the 70S ribosome, positioning it for translation. This Burkholderia multivorans (strain ATCC 17616 / 249) protein is Small ribosomal subunit protein uS3.